The sequence spans 1305 residues: Contactin-associated protein-like 5 (1305 aa).

An N-terminal signal peptide occupies residues 1-24 (MDSVPRLTGVFTLLLSGLWHLGSS). The Extracellular segment spans residues 25 to 1236 (ATNYNCDDPL…PLTNAVRSDS (1212 aa)). The 145-residue stretch at 30 to 174 (CDDPLASLLS…IGMRVEVYGC (145 aa)) folds into the F5/8 type C domain. A disulfide bond links Cys30 and Cys174. 2 Laminin G-like domains span residues 180 to 360 (VADF…TFSC) and 367 to 544 (PITF…IDLC). N-linked (GlcNAc...) asparagine glycans are attached at residues Asn282, Asn355, and Asn496. An intrachain disulfide couples Cys329 to Cys360. Intrachain disulfides connect Cys512–Cys544, Cys550–Cys561, Cys555–Cys570, and Cys572–Cys582. Positions 546-583 (IKDRCLPNYCEHGGFCSQSWTTFYCNCSNTGYTGATCH) constitute an EGF-like 1 domain. Residues 584-790 (NSLYEQSCEV…LRCYGDRHFW (207 aa)) enclose the Fibrinogen C-terminal domain. N-linked (GlcNAc...) asparagine glycosylation occurs at Asn622. A Laminin G-like 3 domain is found at 791–956 (NAVSFYTEAS…KVTSGVRPGC (166 aa)). 5 disulfides stabilise this stretch: Cys929/Cys956, Cys960/Cys973, Cys967/Cys982, Cys984/Cys994, and Cys1163/Cys1198. The 39-residue stretch at 957–995 (PGHCSTYGSICHNGGKCVEKYSGYFCDCTNSPYEGPFCK) folds into the EGF-like 2 domain. Residues 1000–1198 (AVFEAGTSVT…VQGTLMESSC (199 aa)) enclose the Laminin G-like 4 domain. The helical transmembrane segment at 1237 to 1257 (AVIGGVIAVVIFIIFSIIGIM) threads the bilayer. Topologically, residues 1258–1305 (TRFLYQHKQSHRTNQMKEKEYPENLDSSFRNDIDLQNTVSECKREYFI) are cytoplasmic.

This sequence belongs to the neurexin family.

The protein resides in the membrane. Its function is as follows. May play a role in the correct development and proper functioning of the peripheral and central nervous system and be involved in cell adhesion and intercellular communication. The protein is Contactin-associated protein-like 5 (CNTNAP5) of Canis lupus familiaris (Dog).